The primary structure comprises 242 residues: MENKEKIYEGKAKIIFATLNPLEVIQHFKDEITAFNNKKAAIIHEKGILNNYISSFLMKKLIDKGIKTHFISLLNQREQLVKKITIIPIEVVIRNLAAGNFSKRFQIADGTPFKSPIIEFYYKNDELSDPMVSEGHILSFQWLTNQELEKIKILSLKINNILSELFFNVGIKLVDFKLEFGKLHNDEQSDLFLADEISPDTCRLWDISTNKRLDKDRYRLNLGNVIEGYREVAHKLNAIPNL.

Belongs to the SAICAR synthetase family.

The catalysed reaction is 5-amino-1-(5-phospho-D-ribosyl)imidazole-4-carboxylate + L-aspartate + ATP = (2S)-2-[5-amino-1-(5-phospho-beta-D-ribosyl)imidazole-4-carboxamido]succinate + ADP + phosphate + 2 H(+). The protein operates within purine metabolism; IMP biosynthesis via de novo pathway; 5-amino-1-(5-phospho-D-ribosyl)imidazole-4-carboxamide from 5-amino-1-(5-phospho-D-ribosyl)imidazole-4-carboxylate: step 1/2. This Ehrlichia chaffeensis (strain ATCC CRL-10679 / Arkansas) protein is Phosphoribosylaminoimidazole-succinocarboxamide synthase.